The sequence spans 447 residues: Tubulin alpha-2 chain (447 aa).

Residues Gln-11, Glu-71, Gly-144, Thr-145, Thr-179, Asn-206, and Asn-228 each contribute to the GTP site. Glu-71 contributes to the Mg(2+) binding site. The active site involves Glu-254.

It belongs to the tubulin family. In terms of assembly, dimer of alpha and beta chains. A typical microtubule is a hollow water-filled tube with an outer diameter of 25 nm and an inner diameter of 15 nM. Alpha-beta heterodimers associate head-to-tail to form protofilaments running lengthwise along the microtubule wall with the beta-tubulin subunit facing the microtubule plus end conferring a structural polarity. Microtubules usually have 13 protofilaments but different protofilament numbers can be found in some organisms and specialized cells. Requires Mg(2+) as cofactor. Post-translationally, undergoes a tyrosination/detyrosination cycle, the cyclic removal and re-addition of a C-terminal tyrosine residue by the enzymes tubulin tyrosine carboxypeptidase (TTCP) and tubulin tyrosine ligase (TTL), respectively.

It localises to the cytoplasm. Its subcellular location is the cytoskeleton. It catalyses the reaction GTP + H2O = GDP + phosphate + H(+). Its function is as follows. Tubulin is the major constituent of microtubules, a cylinder consisting of laterally associated linear protofilaments composed of alpha- and beta-tubulin heterodimers. Microtubules grow by the addition of GTP-tubulin dimers to the microtubule end, where a stabilizing cap forms. Below the cap, tubulin dimers are in GDP-bound state, owing to GTPase activity of alpha-tubulin. The sequence is that of Tubulin alpha-2 chain (TUBA2) from Eleusine indica (Goosegrass).